The following is a 265-amino-acid chain: Cyclin-B2-5 (265 aa).

This sequence belongs to the cyclin family. Cyclin AB subfamily.

The protein is Cyclin-B2-5 (CYCB2-5) of Arabidopsis thaliana (Mouse-ear cress).